We begin with the raw amino-acid sequence, 554 residues long: Zinc finger protein syd-9 (554 aa).

3 C2H2-type zinc fingers span residues 20-43, 65-87, and 93-116; these read LTCP…QMFH, FICE…RSVH, and YVCK…LKHH. Disordered stretches follow at residues 136-158, 298-319, and 342-383; these read KIVT…TATP, SPDT…PPMA, and ASGQ…CPSP. Low complexity predominate over residues 142–158; sequence NGPTTNGSTPTTSTATP. 2 stretches are compositionally biased toward polar residues: residues 351–360 and 370–379; these read PDSTDTQKGC and SDPSTSSGDS. The C2H2-type 4 zinc finger occupies 387–410; it reads LHCKECGTLVRKSSHLPIHMTMSH. The tract at residues 516-554 is disordered; sequence RMEMSLSPIKPFQQRFSRERSSSSSVERSPSRERSRSPL. Over residues 544 to 554 the composition is skewed to basic and acidic residues; that stretch reads SPSRERSRSPL.

Expressed mainly in body wall muscles and ventral cord motoneurons.

It localises to the nucleus. The protein resides in the nucleus speckle. Functionally, plays a role in regulating synaptic function, probably by modulation of endocytosis. May be dispensable in muscle for normal locomotion. May be involved in post-transcriptional mRNA processing, in parallel with unc-75. This chain is Zinc finger protein syd-9, found in Caenorhabditis elegans.